Consider the following 231-residue polypeptide: Cuticlin 2 (231 aa).

An N-terminal signal peptide occupies residues 1-16; the sequence is MQKLIVFFTTIAAAQA. A run of 12 repeats spans residues 75 to 78, 79 to 82, 90 to 93, 105 to 108, 114 to 117, 121 to 124, 137 to 140, 153 to 156, 169 to 172, 192 to 195, 208 to 211, and 218 to 221. The segment at 75 to 221 is 12 X 4 AA repeats of A-A-P-[AVI]; that stretch reads AAPIAAPAGG…AGGYQAAAPA (147 aa).

Tyrosine residues can be cross-linked in vitro, leading to the formation of insoluble high molecular-weight complexes.

It localises to the secreted. Functionally, component of the insoluble part of the cuticles. This Caenorhabditis elegans protein is Cuticlin 2.